The following is a 424-amino-acid chain: Histidine--tRNA ligase (424 aa).

It belongs to the class-II aminoacyl-tRNA synthetase family. In terms of assembly, homodimer.

The protein localises to the cytoplasm. The enzyme catalyses tRNA(His) + L-histidine + ATP = L-histidyl-tRNA(His) + AMP + diphosphate + H(+). In Shewanella amazonensis (strain ATCC BAA-1098 / SB2B), this protein is Histidine--tRNA ligase.